The following is a 451-amino-acid chain: Chromosomal replication initiator protein DnaA (451 aa).

Residues Met1–Ala82 are domain I, interacts with DnaA modulators. The tract at residues Ala82–Ser114 is domain II. The tract at residues Ala85–Ala112 is disordered. The interval Asn115–Ala331 is domain III, AAA+ region. ATP is bound by residues Gly159, Gly161, Lys162, and Thr163. The interval Gln332 to Thr451 is domain IV, binds dsDNA.

It belongs to the DnaA family. In terms of assembly, oligomerizes as a right-handed, spiral filament on DNA at oriC.

The protein localises to the cytoplasm. In terms of biological role, plays an essential role in the initiation and regulation of chromosomal replication. ATP-DnaA binds to the origin of replication (oriC) to initiate formation of the DNA replication initiation complex once per cell cycle. Binds the DnaA box (a 9 base pair repeat at the origin) and separates the double-stranded (ds)DNA. Forms a right-handed helical filament on oriC DNA; dsDNA binds to the exterior of the filament while single-stranded (ss)DNA is stabiized in the filament's interior. The ATP-DnaA-oriC complex binds and stabilizes one strand of the AT-rich DNA unwinding element (DUE), permitting loading of DNA polymerase. After initiation quickly degrades to an ADP-DnaA complex that is not apt for DNA replication. Binds acidic phospholipids. This is Chromosomal replication initiator protein DnaA from Alkalilimnicola ehrlichii (strain ATCC BAA-1101 / DSM 17681 / MLHE-1).